Here is a 182-residue protein sequence, read N- to C-terminus: uncharacterized protein (182 aa).

The N-terminal stretch at 1 to 26 (MIRALCTIVLIAAGVAVALYLSLVYG) is a signal peptide. Residues 68–90 (YTERPYPVSSTQSPTTTQSPTTT) form a disordered region. The span at 74-90 (PVSSTQSPTTTQSPTTT) shows a compositional bias: low complexity.

This is an uncharacterized protein from Dryophytes versicolor (chameleon treefrog).